Consider the following 104-residue polypeptide: Large ribosomal subunit protein bL21 (104 aa).

Belongs to the bacterial ribosomal protein bL21 family. As to quaternary structure, part of the 50S ribosomal subunit. Contacts protein L20.

Functionally, this protein binds to 23S rRNA in the presence of protein L20. The chain is Large ribosomal subunit protein bL21 from Helicobacter pylori (strain J99 / ATCC 700824) (Campylobacter pylori J99).